Consider the following 417-residue polypeptide: Acetyltransferase cdmC (417 aa).

Asparagine 64 carries N-linked (GlcNAc...) asparagine glycosylation. Transmembrane regions (helical) follow at residues 308 to 328 (IPDGYIGPSLFYMSFVGGYLV), 357 to 377 (GIFWVATFLTVTTPWWIYPLL), and 389 to 409 (LVESVGMNNALAMIGVGAFIL).

It belongs to the wax synthase family.

The protein resides in the membrane. The enzyme catalyses chrodrimanin A + acetyl-CoA = chrodrimanin B + CoA. It participates in secondary metabolite biosynthesis; terpenoid biosynthesis. Functionally, acetyltransferase; part of the gene cluster that mediates the biosynthesis of chrodrimanin B, a meroterpenoid that acts as a potent blocker of insect GABA-gated chloride channels. The first step of the pathway is the biosynthesis of 6-hydroxymellein by the polyketide synthase cdmE. The prenyltransferase cdmH acts as a 6-hydroxymellein 5-farnesyltransferase and produces the hydrophobic metabolite verruculide C. The FAD-dependent monooxygenase cdmI further converts verruculide C into verruculide B. The terpene cyclase cdmG then produced the pentacyclic molecule 3-hydroxypentacecilide A, the backbone structure of chrodrimanin B, via folding the farnesyl moiety of the substrate into the chair-boat conformation. The short-chain dehydrogenase/reductase cdmF functions as the 3-OH dehydrogenase that oxidizes the C-3 hydroxyl group of 3-hydroxypentacecilide A and produces chrodrimanin C, the dehydrogenated product of 3-hydroxypentacecilide A. The cytochrome P450 monooxygenase cdmJ then accepts both 3-hydroxypentacecilide A and chrodrimanin C and functions as a C-7-beta-hydroxylase to produce respectively chrodrimanin H and chrodrimanin F. The dioxygenase cdmA accepts chrodrimanin H to afford chrodrimanin E, which is further transformed to chrodrimanin A by the dioxygenase cdmD. CdmA can also accept chrodrimanin C as substrate to convert it into verruculide A, which is further converted into chrodrimanin T by cdmD. The last step of the biosynthesis is proposed to be performed by the acetyltransferase cdmC which acetylates chrodrimanin A to yield chrodrimanin B. The pathway may also lead to the production of additional shunt products, including chrodrimanins T and U. The protein is Acetyltransferase cdmC of Talaromyces verruculosus (Penicillium verruculosum).